The primary structure comprises 381 residues: Beta-lactamase CMY-4 (381 aa).

The first 20 residues, 1-20, serve as a signal peptide directing secretion; it reads MMKKSLCCALLLTASFSTFA. The active-site Acyl-ester intermediate is serine 84. A beta-lactam is bound by residues serine 84, glutamine 140, tyrosine 170, and asparagine 172.

It belongs to the class-C beta-lactamase family.

It catalyses the reaction a beta-lactam + H2O = a substituted beta-amino acid. In terms of biological role, class C beta-lactamase which confers resistance to penicillins and cephalosporins. This Klebsiella pneumoniae protein is Beta-lactamase CMY-4.